A 452-amino-acid chain; its full sequence is Packaging protein 1 (452 aa).

Residues 1–78 (MLPCRSTGRR…AKPPQRGSLL (78 aa)) form a disordered region. 173–180 (GPTGCGKS) serves as a coordination point for ATP. The segment at 442-452 (RAYHVRKNKYQ) is DNA-binding.

The protein belongs to the adenoviridae packaging protein 1 family. Homodimer. Part of a genome packaging complex composed of packaging proteins 1, 2 and 3; this complex specifically binds to the packaging sequence on the left end of viral genomic DNA and performs packaging of the viral genome. Interacts with protein 33K.

The protein resides in the virion. Its subcellular location is the host nucleus. It is found in the host nucleoplasm. It localises to the host nucleolus. Component of the packaging machinery which encapsidates the viral DNA into preformed capsids and transcriptional activator of the viral major late promoter (MLP). Binds, along with packaging proteins 2 and 3, to the specific packaging sequence on the left end of viral genomic DNA and displays ATPase activity thereby providing the power stroke of the packaging machinery. The activity of packaging protein IVa2 is stimulated by protein 33K which acts as a terminase. May be the protein that pumps DNA into the capsid powered by ATP hydrolysis. Specifically binds to the 5'-CG-3' nucleotides of the repeats making up the packaging sequence. Component of the DEF-A and DEF-B transcription factors that bind downstream elements of the major late promoter (MLP), and stimulate transcription from the MLP after initiation of viral DNA replication. DEF-A is a heterodimer packaging proteins 1 and 2 and DEF-B is a homodimer of packaging protein 1. The chain is Packaging protein 1 from Homo sapiens (Human).